We begin with the raw amino-acid sequence, 268 residues long: Glucosamine-6-phosphate deaminase (268 aa).

D67 serves as the catalytic Proton acceptor; for enolization step. N136 (for ring-opening step) is an active-site residue. H138 serves as the catalytic Proton acceptor; for ring-opening step. The For ring-opening step role is filled by E143.

It belongs to the glucosamine/galactosamine-6-phosphate isomerase family. NagB subfamily. In terms of assembly, homohexamer.

It catalyses the reaction alpha-D-glucosamine 6-phosphate + H2O = beta-D-fructose 6-phosphate + NH4(+). It functions in the pathway amino-sugar metabolism; N-acetylneuraminate degradation; D-fructose 6-phosphate from N-acetylneuraminate: step 5/5. Functionally, catalyzes the reversible isomerization-deamination of glucosamine 6-phosphate (GlcN6P) to form fructose 6-phosphate (Fru6P) and ammonium ion. The protein is Glucosamine-6-phosphate deaminase of Shewanella loihica (strain ATCC BAA-1088 / PV-4).